The primary structure comprises 227 residues: Extracellular deoxyribonuclease (227 aa).

Residues 1-20 (MFRPLLSFTLARLVSLPLHA) form the signal peptide.

The protein belongs to the EndA/NucM nuclease family.

The protein resides in the secreted. This is Extracellular deoxyribonuclease from Aeromonas hydrophila.